Consider the following 256-residue polypeptide: Thrombin-like enzyme cerastocytin (256 aa).

The N-terminal stretch at 1–18 is a signal peptide; sequence MVLISVLASLLVLQLSYA. Residues 19–24 constitute a propeptide that is removed on maturation; the sequence is QKSSEL. Residues 25-247 form the Peptidase S1 domain; the sequence is VIGGAECNIN…YTDWIRNIIA (223 aa). 5 cysteine pairs are disulfide-bonded: C31-C161, C98-C254, C140-C208, C172-C187, and C198-C223. N-linked (GlcNAc...) asparagine glycosylation occurs at N44. Active-site charge relay system residues include H65 and D108. N119, N120, and N152 each carry an N-linked (GlcNAc...) asparagine glycan. Residue S202 is the Charge relay system of the active site.

The protein belongs to the peptidase S1 family. Snake venom subfamily. Monomer. Expressed by the venom gland.

It is found in the secreted. Its platelets aggregating activity is inhibited by chlorpromazine, theophylline mepacrine. Its platelet aggregating activity and its amidolytic activity are inhibited by PMSF, TPCK, TLCK and soybean trypsin inhibitors. Is unaffected by hirudin or by antithrombin-III in the presence of heparin. In terms of biological role, thrombin-like snake venom serine protease which potently induces platelet aggregation and has fibrinogenolytic activities. Clots purified fibrinogen and hydrolyzes alpha-chains (FGA). High concentrations of this enzyme also cleave prothrombin (F2) and factor X (F10). Is also able to activate factor XIII (F8). The sequence is that of Thrombin-like enzyme cerastocytin from Cerastes cerastes (Horned desert viper).